The sequence spans 272 residues: Transcription factor E2F6 (272 aa).

The interval 1–62 is binding to corepressors; it reads MSQQRTARRQ…MRKALKVKRP (62 aa). A DNA-binding region spans residues 50–129; that stretch reads YVSMRKALKV…SKNHIRWIGS (80 aa). The DEF box motif lies at 95 to 129; it reads KLGVRKRRVYDITNVLDGIELVEKKSKNHIRWIGS. Residues 130–222 are dimerization; the sequence is DLNNFGAAPQ…PAPREDSITV (93 aa). The interval 143–164 is leucine-zipper; sequence LQAELSDLSAMEDALDELIKDC. A transcription repression region spans residues 173 to 272; sequence DDKENERLAY…CPEKEDEPPQ (100 aa). Residues 242 to 272 form a disordered region; sequence HSNGKTNDGIGASPSKSSHPQCPEKEDEPPQ.

The protein belongs to the E2F/DP family. In terms of assembly, forms heterodimers with DP family members TFDP1 or TFDP2. Component of the DRTF1/E2F transcription factor complex. Part of the E2F6.com-1 complex in G0 phase composed of E2F6, MGA, MAX, TFDP1, CBX3, BAT8, EUHMTASE1, RING1, RNF2, MBLR, L3MBTL2 and YAF2. Component of some MLL1/MLL complex, at least composed of the core components KMT2A/MLL1, ASH2L, HCFC1/HCF1, WDR5 and RBBP5, as well as the facultative components BACC1, CHD8, E2F6, HSP70, INO80C, KANSL1, LAS1L, MAX, MCRS1, MGA, KAT8/MOF, PELP1, PHF20, PRP31, RING2, RUVB1/TIP49A, RUVB2/TIP49B, SENP3, TAF1, TAF4, TAF6, TAF7, TAF9 and TEX10.

It localises to the nucleus. Inhibitor of E2F-dependent transcription. Binds DNA cooperatively with DP proteins through the E2 recognition site, 5'-TTTC[CG]CGC-3'. Has a preference for the 5'-TTTCCCGC-3' E2F recognition site. E2F6 lacks the transcriptional activation and pocket protein binding domains. Appears to regulate a subset of E2F-dependent genes whose products are required for entry into the cell cycle but not for normal cell cycle progression. Represses expression of some meiosis-specific genes, including SLC25A31/ANT4. May silence expression via the recruitment of a chromatin remodeling complex containing histone H3-K9 methyltransferase activity. Overexpression delays the exit of cells from the S-phase. In Mus musculus (Mouse), this protein is Transcription factor E2F6.